Here is a 478-residue protein sequence, read N- to C-terminus: Cysteine protease ATG4B (478 aa).

Residues 1 to 15 (MTSLPDRGVSSSSSD) are compositionally biased toward polar residues. The interval 1 to 31 (MTSLPDRGVSSSSSDPLCEGNIAPCSSSSEQ) is disordered. The active-site Nucleophile is cysteine 164. Residues aspartate 361 and histidine 363 contribute to the active site.

It belongs to the peptidase C54 family. Interacts with ATG8.

It is found in the cytoplasm. It carries out the reaction [protein]-C-terminal L-amino acid-glycyl-phosphatidylethanolamide + H2O = [protein]-C-terminal L-amino acid-glycine + a 1,2-diacyl-sn-glycero-3-phosphoethanolamine. Functionally, cysteine protease that plays a key role in autophagy by mediating both proteolytic activation and delipidation of ATG8 family proteins. The protease activity is required for proteolytic activation of ATG8 family proteins: cleaves the C-terminal amino acid of ATG8 proteins to reveal a C-terminal glycine. Exposure of the glycine at the C-terminus is essential for ATG8 proteins conjugation to phosphatidylethanolamine (PE) and insertion to membranes, which is necessary for autophagy. In addition to the protease activity, also mediates delipidation of PE-conjugated ATG8 proteins. In Oryza sativa subsp. japonica (Rice), this protein is Cysteine protease ATG4B (ATG4B).